We begin with the raw amino-acid sequence, 261 residues long: MAALLGIVSPVTFTGKHPVNSRSRRRTVVKCSNERRILFNRIAPVYDNLNDLLSLGQHRIWKNMAVSWSGAKKGDYVLDLCCGSGDLAFLLSEKVGSTGKVMGLDFSSEQLAVAATRQSLKARSCYKCIEWIEGDAIDLPFDDCEFDAVTMGYGLRNVVDRLRAMKEMYRVLKPGSRVSILDFNKSNQSVTTFMQGWMIDNVVVPVATVYDLAKEYEYLKYSINGYLTGEELETLALEAGFSSACHYEISGGFMGNLVAMR.

The transit peptide at 1 to 30 directs the protein to the chloroplast; sequence MAALLGIVSPVTFTGKHPVNSRSRRRTVVK.

It belongs to the class I-like SAM-binding methyltransferase superfamily. MenG/UbiE family.

It is found in the plastid. The protein localises to the chloroplast. The catalysed reaction is demethylphylloquinol + S-adenosyl-L-methionine = phylloquinol + S-adenosyl-L-homocysteine + H(+). In terms of biological role, involved in the biosynthesis of phylloquinone (vitamin K1). Methyltransferase required for the conversion of 2-phytyl-1,4-beta-naphthoquinol to phylloquinol. The polypeptide is 2-phytyl-1,4-beta-naphthoquinone methyltransferase, chloroplastic (Arabidopsis thaliana (Mouse-ear cress)).